A 330-amino-acid chain; its full sequence is Pyridoxal 5'-phosphate synthase subunit PdxS (330 aa).

Asp-23 serves as a coordination point for D-ribose 5-phosphate. Residue Lys-80 is the Schiff-base intermediate with D-ribose 5-phosphate of the active site. Gly-152 is a D-ribose 5-phosphate binding site. Position 164 (Arg-164) interacts with D-glyceraldehyde 3-phosphate. Residues Gly-250 and 271–272 (GS) contribute to the D-ribose 5-phosphate site.

This sequence belongs to the PdxS/SNZ family. In terms of assembly, in the presence of PdxT, forms a dodecamer of heterodimers.

The catalysed reaction is aldehydo-D-ribose 5-phosphate + D-glyceraldehyde 3-phosphate + L-glutamine = pyridoxal 5'-phosphate + L-glutamate + phosphate + 3 H2O + H(+). It functions in the pathway cofactor biosynthesis; pyridoxal 5'-phosphate biosynthesis. Its function is as follows. Catalyzes the formation of pyridoxal 5'-phosphate from ribose 5-phosphate (RBP), glyceraldehyde 3-phosphate (G3P) and ammonia. The ammonia is provided by the PdxT subunit. Can also use ribulose 5-phosphate and dihydroxyacetone phosphate as substrates, resulting from enzyme-catalyzed isomerization of RBP and G3P, respectively. The protein is Pyridoxal 5'-phosphate synthase subunit PdxS of Methanocaldococcus jannaschii (strain ATCC 43067 / DSM 2661 / JAL-1 / JCM 10045 / NBRC 100440) (Methanococcus jannaschii).